A 202-amino-acid chain; its full sequence is LexA repressor 2 (202 aa).

Residues 28 to 48 constitute a DNA-binding region (H-T-H motif); it reads LADIATRFGFASRSVARKHIT. Catalysis depends on for autocatalytic cleavage activity residues Ser-123 and Lys-160.

Belongs to the peptidase S24 family. In terms of assembly, homodimer.

The catalysed reaction is Hydrolysis of Ala-|-Gly bond in repressor LexA.. In terms of biological role, represses a number of genes involved in the response to DNA damage (SOS response), including recA and lexA. In the presence of single-stranded DNA, RecA interacts with LexA causing an autocatalytic cleavage which disrupts the DNA-binding part of LexA, leading to derepression of the SOS regulon and eventually DNA repair. This is LexA repressor 2 from Pseudomonas putida (strain ATCC 47054 / DSM 6125 / CFBP 8728 / NCIMB 11950 / KT2440).